Here is a 106-residue protein sequence, read N- to C-terminus: MVNVPKTRKTYCKGKACRKHTQHKVTQYKAGKASLFAQGKRRYDRKQSGFGGQTKQIFRKKAKTTKKVVLRLECLSCKTKAQLPLKRCKHFELGGEKKQKGQALQF.

This sequence belongs to the eukaryotic ribosomal protein eL42 family.

This Eremothecium gossypii (strain ATCC 10895 / CBS 109.51 / FGSC 9923 / NRRL Y-1056) (Yeast) protein is Large ribosomal subunit protein eL42 (RPL44).